The primary structure comprises 326 residues: HTH-type transcriptional regulator SyrM (326 aa).

The 58-residue stretch at 32–89 (IDLNLLVDLEALLQYRHITQAAQHVGRSQPAMSRALSRLRGMLKDDLLVAGSRGLVLT) folds into the HTH lysR-type domain. A DNA-binding region (H-T-H motif) is located at residues 49-68 (ITQAAQHVGRSQPAMSRALS).

The protein belongs to the LysR transcriptional regulatory family.

Acts in trans to stimulate nod gene expression via nodD3 and exo gene expression via SyrA. The chain is HTH-type transcriptional regulator SyrM (syrM) from Rhizobium meliloti (strain 1021) (Ensifer meliloti).